The primary structure comprises 413 residues: Peptidase T (413 aa).

Residue His-84 participates in Zn(2+) binding. Asp-86 is a catalytic residue. A Zn(2+)-binding site is contributed by Asp-146. Glu-180 (proton acceptor) is an active-site residue. Residues Glu-181, Asp-203, and His-385 each coordinate Zn(2+).

Belongs to the peptidase M20B family. The cofactor is Zn(2+).

It is found in the cytoplasm. The enzyme catalyses Release of the N-terminal residue from a tripeptide.. Functionally, cleaves the N-terminal amino acid of tripeptides. This Limosilactobacillus fermentum (strain NBRC 3956 / LMG 18251) (Lactobacillus fermentum) protein is Peptidase T.